A 187-amino-acid polypeptide reads, in one-letter code: MYLQVETRTSSRLHLKRAPGIRSWSLLVGILSIGLAAAYYSGDSLGWKLFYVTGCLFVAVQNLEDWEEAIFDKSTGKVVLKTFSLYKKLLTLFRAGHDQVVVLLHDVRDVSVEEEKVRYFGKGYMVVLRLATGFSHPLTQSAVMGHRSDVEAIAKLITSFLELHCLESPTELSQSSDSEAGDPASQS.

A helical transmembrane segment spans residues glycine 20–glycine 42. Serine 168 bears the Phosphoserine mark.

Belongs to the CYBC1 family. Interacts with CYBB; CYBC1 may act as a chaperone stabilizing Cytochrome b-245 heterodimer. As to expression, highly expressed in macrophages, neutrophils and monocytes.

The protein resides in the endoplasmic reticulum membrane. Functionally, functions as a chaperone necessary for a stable expression of the CYBA and CYBB subunits of the cytochrome b-245 heterodimer. Controls the phagocyte respiratory burst and is essential for innate immunity. This is Cytochrome b-245 chaperone 1 from Homo sapiens (Human).